The following is a 131-amino-acid chain: D-ribose pyranase (131 aa).

Catalysis depends on H20, which acts as the Proton donor. Residues D28, H98, and 120–122 contribute to the substrate site; that span reads FSN.

It belongs to the RbsD / FucU family. RbsD subfamily. As to quaternary structure, homodecamer.

It is found in the cytoplasm. It catalyses the reaction beta-D-ribopyranose = beta-D-ribofuranose. It participates in carbohydrate metabolism; D-ribose degradation; D-ribose 5-phosphate from beta-D-ribopyranose: step 1/2. Its function is as follows. Catalyzes the interconversion of beta-pyran and beta-furan forms of D-ribose. This is D-ribose pyranase from Oenococcus oeni (strain ATCC BAA-331 / PSU-1).